The primary structure comprises 558 residues: MSNDGRSRNRDRRYDEVPSDLPYQDTTIRTHPTLHDSERAVSADPLPPPPLPLQPPFGPDFYSSDTEEPAIAPDLKPVRRFVPDSWKNFFRGKKKDPEWDKPVSDIRYISDGVECSPPASPARPNHRSPLNSCKDPYGGSEGTFSSRKEADAVFPRDPYGSLDRHTQTVRTYSEKVEEYNLRYSYMKSWAGLLRILGVVELLLGAGVFACVTAYIHKDSEWYNLFGYSQPYGMGGVGGLGSMYGGYYYTGPKTPFVLVVAGLAWITTIIILVLGMSMYYRTILLDSNWWPLTEFGINVALFILYMAAAIVYVNDTNRGGLCYYPLFNTPVNAVFCRVEGGQIAAMIFLFVTMIVYLISALVCLKLWRHEAARRHREYMEQQEINEPSLSSKRKMCEMATSGDRQRDSEVNFKELRTAKMKPELLSGHIPPGHIPKPIVMPDYVAKYPVIQTDDERERYKAVFQDQFSEYKELSAEVQAVLRKFDELDAVMSRLPHHSESRQEHERISRIHEEFKKKKNDPTFLEKKERCDYLKNKLSHIKQRIQEYDKVMNWDVQGYS.

Residues 1 to 16 are compositionally biased toward basic and acidic residues; the sequence is MSNDGRSRNRDRRYDE. Disordered regions lie at residues 1–58 and 115–145; these read MSND…PPFG and CSPP…GTFS. The Cytoplasmic portion of the chain corresponds to 1-194; that stretch reads MSNDGRSRNR…YMKSWAGLLR (194 aa). The span at 45 to 58 shows a compositional bias: pro residues; the sequence is PLPPPPLPLQPPFG. A phosphoserine mark is found at serine 116, serine 120, and serine 161. Position 166 is a phosphothreonine (threonine 166). In terms of domain architecture, MARVEL spans 188 to 367; it reads SWAGLLRILG…SALVCLKLWR (180 aa). The chain crosses the membrane as a helical span at residues 195–215; the sequence is ILGVVELLLGAGVFACVTAYI. Residues 216-223 are Extracellular-facing; that stretch reads HKDSEWYN. The helical transmembrane segment at 224–244 threads the bilayer; it reads LFGYSQPYGMGGVGGLGSMYG. Residues 245–254 are Cytoplasmic-facing; sequence GYYYTGPKTP. Residues 255-275 traverse the membrane as a helical segment; the sequence is FVLVVAGLAWITTIIILVLGM. Residues 276–291 are Extracellular-facing; it reads SMYYRTILLDSNWWPL. The helical transmembrane segment at 292 to 312 threads the bilayer; it reads TEFGINVALFILYMAAAIVYV. Topologically, residues 313-319 are cytoplasmic; that stretch reads NDTNRGG. A helical transmembrane segment spans residues 320-337; the sequence is LCYYPLFNTPVNAVFCRV. Over 338-341 the chain is Extracellular; the sequence is EGGQ. Residues 342–362 form a helical membrane-spanning segment; sequence IAAMIFLFVTMIVYLISALVC. Residues 363–558 lie on the Cytoplasmic side of the membrane; the sequence is LKLWRHEAAR…VMNWDVQGYS (196 aa). Phosphoserine is present on serine 387. A Glycyl lysine isopeptide (Lys-Gly) (interchain with G-Cter in ubiquitin) cross-link involves residue lysine 412. A coiled-coil region spans residues 439–548; it reads MPDYVAKYPV…IKQRIQEYDK (110 aa). The 112-residue stretch at 440–551 folds into the OCEL domain; it reads PDYVAKYPVI…RIQEYDKVMN (112 aa).

Belongs to the ELL/occludin family. In terms of assembly, interacts with TJP1. Interacts with the ubiquitin ligase ITCH. Interacts (via C-terminal cytoplasmic domain) with LSR (via the cytoplasmic domain), ILDR1 and ILDR2; the interaction is required to recruit MARVELD2 to tricellular contacts. Post-translationally, ubiquitinated by ITCH; but this ubiquitination does not lead to proteasomal degradation. Polyubiquitinated at Lys-412 via 'Lys-63'-linked ubiquitin chains; deubiquitinated by USP53. In terms of processing, phosphorylated.

It localises to the cell membrane. The protein localises to the cell junction. The protein resides in the tight junction. In terms of biological role, plays a role in the formation of tricellular tight junctions and of epithelial barriers. Required for normal hearing via its role in the separation of the endolymphatic and perilymphatic spaces of the organ of Corti in the inner ear, and for normal survival of hair cells in the organ of Corti. The sequence is that of MARVEL domain-containing protein 2 from Homo sapiens (Human).